A 180-amino-acid chain; its full sequence is Cytokinin-beta-glucosidase 1 (180 aa).

Its function is as follows. Hydrolyzes cytokinin glucosides thus liberating free cytokinins. This Panax ginseng (Korean ginseng) protein is Cytokinin-beta-glucosidase 1 (ROLC1).